The chain runs to 729 residues: MAPPAKRARGLTLPGYKYLGPGNSLDQGEPTNPSDAAAKEHDEAYDKYIKSGKNPYFYFSAADEKFIKETEHAKDYGGKIGHYFFRAKRAFRPKLSETDSPTTSQQPEVRRSPRKHPGSKPPGKRPAPRHIFINLAKKKAKGTSNTNSNSMSENVEQHNPINAGTELSATGNESGGGGGGGGGRGAGGVGVSTGSFNNQTEFQYLGEGLVRITAHASRLIHLNMPEHETYKRIHVLNSESGVAGQMVQDDAHTQMVTPWSLIDANAWGVWFNPADWQLISNNMTEINLVSFEQEIFNVVLKTITESATSPPTKIYNNDLTASLMVALDTNNTLPYTPAAPRSETLGFYPWLPTKPTQYRYYLSCTRNLNPPTYTGQSQQITDSIQTGLHSDIMFYTIENAVPIHLLRTGDEFSTGIYHFDTKPLKLTHSWQTNRSLGLPPKLLTEPTTEGDQHPGTLPAANTRKGYHQTMNNSYTEATAIRPAQVGYNTPYMNFEYSNGGPFLTPIVPTADTQYNDDEPNGAIRFTMGYQHGQLTTSSQELERYTFNPQSKCGRAPKQQFNQQAPLNLENTNNGTLLPSDPIGGKPNMHFMNTLNTYGPLTALNNTAPVFPNGQIWDKELDTDLKPRLHVTAPFVCKNNPPGQLFVKIAPNLTDDFNADSPQQPRIITYSNFWWKGTLTFTAKMRSSNMWNPIQQHTTTAENIGNYIPTNIGGIKMFPEYSQLIPRKLY.

3 disordered regions span residues 1-38 (MAPPAKRARGLTLPGYKYLGPGNSLDQGEPTNPSDAAA), 94-129 (KLSETDSPTTSQQPEVRRSPRKHPGSKPPGKRPAPR), and 163-186 (AGTELSATGNESGGGGGGGGGRGA). Positions 4-12 (PAKRARGLT) match the Nuclear localization signal motif. The tract at residues 18 to 63 (YLGPGNSLDQGEPTNPSDAAAKEHDEAYDKYIKSGKNPYFYFSAAD) is phospholipase A2-like. Polar residues-rich tracts occupy residues 24–34 (SLDQGEPTNPS) and 98–107 (TDSPTTSQQP). A compositionally biased stretch (basic residues) spans 112–128 (SPRKHPGSKPPGKRPAP). Over residues 173–186 (ESGGGGGGGGGRGA) the composition is skewed to gly residues. Asn330 serves as a coordination point for Mg(2+). The disordered stretch occupies residues 437 to 465 (GLPPKLLTEPTTEGDQHPGTLPAANTRKG).

This sequence belongs to the parvoviridae capsid protein family.

The protein localises to the virion. It localises to the host nucleus. Functionally, capsid protein self-assembles to form an icosahedral capsid with a T=1 symmetry, about 22 nm in diameter, and consisting of 60 copies of two size variants of the capsid proteins, VP1 and VP2, which differ by the presence of an N-terminal extension in the minor protein VP1. The capsid encapsulates the genomic ssDNA. Capsid proteins are responsible for the attachment to host cell receptors. This attachment induces virion internalization predominantly through clathrin-dependent endocytosis. Binding to the host receptors also induces capsid rearrangements leading to surface exposure of VP1 N-terminus, specifically its phospholipase A2-like region and putative nuclear localization signal(s). VP1 N-terminus might serve as a lipolytic enzyme to breach the endosomal membrane during entry into host cell and might contribute to virus transport to the nucleus. The chain is Capsid protein VP1 from Sus scrofa (Pig).